A 185-amino-acid chain; its full sequence is MIEASKLKAGMTFEAEGKLIRVLEASHHKPGKGNTIMRMKLRDVRTGSTFDTTYRPDETFEQAIIETVPAQYLYKMDDTAYFMNTDTYDQYEIPVANVEQELLYILENSDVKIQFYGSEVIGVTVPTTVELTVAETQPSIKGATVTGSGKPATLETGLVVNVPDFIEAGQKLIINTAEGTYVSRA.

Belongs to the elongation factor P family.

The protein localises to the cytoplasm. Its pathway is protein biosynthesis; polypeptide chain elongation. Involved in peptide bond synthesis. Stimulates efficient translation and peptide-bond synthesis on native or reconstituted 70S ribosomes in vitro. Probably functions indirectly by altering the affinity of the ribosome for aminoacyl-tRNA, thus increasing their reactivity as acceptors for peptidyl transferase. The sequence is that of Elongation factor P from Streptococcus pyogenes serotype M4 (strain MGAS10750).